A 283-amino-acid polypeptide reads, in one-letter code: Polyamine aminopropyltransferase (283 aa).

One can recognise a PABS domain in the interval 5 to 241; that stretch reads NNWYIEHFER…GWWSVTLARK (237 aa). Gln-35 is a binding site for S-methyl-5'-thioadenosine. Residues His-66 and Asp-90 each coordinate spermidine. S-methyl-5'-thioadenosine contacts are provided by residues Asp-110 and 141–142; that span reads DG. The active-site Proton acceptor is the Asp-160. 160-163 contributes to the spermidine binding site; sequence DSTD. Residue Pro-167 coordinates S-methyl-5'-thioadenosine.

The protein belongs to the spermidine/spermine synthase family. In terms of assembly, homodimer or homotetramer.

The protein resides in the cytoplasm. It catalyses the reaction S-adenosyl 3-(methylsulfanyl)propylamine + putrescine = S-methyl-5'-thioadenosine + spermidine + H(+). It participates in amine and polyamine biosynthesis; spermidine biosynthesis; spermidine from putrescine: step 1/1. Functionally, catalyzes the irreversible transfer of a propylamine group from the amino donor S-adenosylmethioninamine (decarboxy-AdoMet) to putrescine (1,4-diaminobutane) to yield spermidine. This Stenotrophomonas maltophilia (strain R551-3) protein is Polyamine aminopropyltransferase.